Reading from the N-terminus, the 150-residue chain is MEKKIAVTAGTFDLLHPGHFNTLNFAKKHADELVVIIARDETVKKIKGRSPVIPEEQRKIMIEALKPVDRAVLGSLTNKLEPILEIRPDVIVLGPDQTTYQINELKAQLAEHSLYPEILKVEDYVKCPFHSSYDILKEIVRRWCCKELKV.

ATP is bound by residues T11–F12, H16–H19, D96, and Y124.

Belongs to the archaeal FAD synthase family. In terms of assembly, homodimer. Requires a divalent metal cation as cofactor.

It carries out the reaction FMN + ATP + H(+) = FAD + diphosphate. Its pathway is cofactor biosynthesis; FAD biosynthesis; FAD from FMN: step 1/1. Catalyzes the transfer of the AMP portion of ATP to flavin mononucleotide (FMN) to produce flavin adenine dinucleotide (FAD) coenzyme. The polypeptide is FAD synthase (Methanococcus maripaludis (strain DSM 14266 / JCM 13030 / NBRC 101832 / S2 / LL)).